Consider the following 62-residue polypeptide: MARYRHSRSRSRSRYRRRRRRRSRYRSRRRRYRGRRRRRSRRGRRRRGYSRRRYSRRRRRRY.

A disordered region spans residues 1–62 (MARYRHSRSR…RYSRRRRRRY (62 aa)).

It belongs to the protamine P1 family. As to expression, testis.

Its subcellular location is the nucleus. The protein resides in the chromosome. Functionally, protamines substitute for histones in the chromatin of sperm during the haploid phase of spermatogenesis. They compact sperm DNA into a highly condensed, stable and inactive complex. This Wallabia bicolor (Swamp wallaby) protein is Sperm protamine P1 (PRM1).